The primary structure comprises 225 residues: Ribonuclease 3 (225 aa).

One can recognise an RNase III domain in the interval 5-127 (IDKLERKLGY…IIGAIYLDSD (123 aa)). Glu-40 contacts Mg(2+). Asp-44 is an active-site residue. Asp-113 and Glu-116 together coordinate Mg(2+). Glu-116 is a catalytic residue. The DRBM domain maps to 154–224 (DPKTRLQEFL…AETALEQLTN (71 aa)). Residues 204–225 (GTSRRKAEQAAAETALEQLTNG) form a disordered region. Positions 212–225 (QAAAETALEQLTNG) are enriched in low complexity.

This sequence belongs to the ribonuclease III family. In terms of assembly, homodimer. It depends on Mg(2+) as a cofactor.

Its subcellular location is the cytoplasm. It catalyses the reaction Endonucleolytic cleavage to 5'-phosphomonoester.. Digests double-stranded RNA. Involved in the processing of primary rRNA transcript to yield the immediate precursors to the large and small rRNAs (23S and 16S). Processes some mRNAs, and tRNAs when they are encoded in the rRNA operon. Processes pre-crRNA and tracrRNA of type II CRISPR loci if present in the organism. This is Ribonuclease 3 from Vibrio parahaemolyticus serotype O3:K6 (strain RIMD 2210633).